Here is a 450-residue protein sequence, read N- to C-terminus: MPSILLLGSGFVAHPTLEYLSRRKENNITVACRTLSKAEAFINGIPNSKAIALDVNDEAALEKAVSEHDLTISLIPYTYHATVMKAAIKHGKHVCTTSYVNPKMAELEEAAIKAGSICMNEIGVDPGIDHLYAIKTIEEVHKAGGKIKSFLSYCGGLPAPEDSNNPLGYKFSWSSRGVLLALRNSAKFYENGKLVEIDGKDLMETAKPYFIYPGYAFVCYPNRDSTVYQERYQIPEAETIIRGTLRYQGFPEFIHCLVDMGFLDETAQEYLSPEAPALPWKEVTARVIKAESSSEADLIKKISSIHKFKDEDDKKRILNGLKWLGMFSSKPVTPRGNPLDTLCATLEELMQYEEGERDMLILQHKFEVETKEGKRQTRTCTLLDYGVPNGYTSMAKLVGVPCGVATQQILDGVINTPGVLAPNDMKLCGPLIDTLAKEGIRLEEEIIDEE.

NADP(+) contacts are provided by residues 9 to 12, 32 to 34, 54 to 55, Ile-75, 97 to 98, 124 to 126, and Ser-174; these read SGFV, CRT, DV, TS, and VDP. L-saccharopine is bound by residues 98–99 and Asp-125; that span reads SY. L-saccharopine-binding positions include Arg-223 and 244 to 246; that span reads TLR.

This sequence belongs to the saccharopine dehydrogenase family. Homodimer.

Its subcellular location is the cytoplasm. It carries out the reaction L-saccharopine + NADP(+) + H2O = (S)-2-amino-6-oxohexanoate + L-glutamate + NADPH + H(+). It participates in amino-acid biosynthesis; L-lysine biosynthesis via AAA pathway; L-lysine from L-alpha-aminoadipate (fungal route): step 2/3. The sequence is that of Saccharopine dehydrogenase [NADP(+), L-glutamate-forming] from Schizosaccharomyces pombe (strain 972 / ATCC 24843) (Fission yeast).